We begin with the raw amino-acid sequence, 316 residues long: Pantothenate kinase (316 aa).

95–102 (GSVAVGKS) lines the ATP pocket.

It belongs to the prokaryotic pantothenate kinase family.

The protein localises to the cytoplasm. It carries out the reaction (R)-pantothenate + ATP = (R)-4'-phosphopantothenate + ADP + H(+). It functions in the pathway cofactor biosynthesis; coenzyme A biosynthesis; CoA from (R)-pantothenate: step 1/5. This is Pantothenate kinase from Shewanella sp. (strain MR-4).